The chain runs to 246 residues: Probable transcriptional regulatory protein GK2594 (246 aa).

This sequence belongs to the TACO1 family.

The protein localises to the cytoplasm. This Geobacillus kaustophilus (strain HTA426) protein is Probable transcriptional regulatory protein GK2594.